We begin with the raw amino-acid sequence, 129 residues long: Small ribosomal subunit protein uS11 (129 aa).

Belongs to the universal ribosomal protein uS11 family. As to quaternary structure, part of the 30S ribosomal subunit. Interacts with proteins S7 and S18. Binds to IF-3.

Functionally, located on the platform of the 30S subunit, it bridges several disparate RNA helices of the 16S rRNA. Forms part of the Shine-Dalgarno cleft in the 70S ribosome. The sequence is that of Small ribosomal subunit protein uS11 from Rhodopseudomonas palustris (strain HaA2).